The sequence spans 79 residues: Major outer membrane lipoprotein Lpp 3 (79 aa).

The signal sequence occupies residues 1-21; that stretch reads MNRTNKLILGAVVLGSALLAG. Residue C22 is the site of N-palmitoyl cysteine attachment. C22 is lipidated: S-diacylglycerol cysteine. 2 consecutive repeats follow at residues 25–35 and 39–49; these read NAKIDQLSSDV and SAKVDQLSNDV. The stretch at 28-76 forms a coiled coil; the sequence is IDQLSSDVQTLSAKVDQLSNDVNAMRSDVQAAKDDAARANQRLDNKVLR. K79 bears the N6-murein peptidoglycan lysine mark.

Belongs to the Lpp family. As to quaternary structure, homotrimer.

Its subcellular location is the cell outer membrane. The protein localises to the secreted. It is found in the cell wall. Its function is as follows. A highly abundant outer membrane lipoprotein that controls the distance between the inner and outer membranes. The only protein known to be covalently linked to the peptidoglycan network (PGN). Also non-covalently binds the PGN. The link between the cell outer membrane and PGN contributes to maintenance of the structural and functional integrity of the cell envelope, and maintains the correct distance between the PGN and the outer membrane. This chain is Major outer membrane lipoprotein Lpp 3, found in Salmonella paratyphi A (strain ATCC 9150 / SARB42).